Consider the following 328-residue polypeptide: GTP 3',8-cyclase (328 aa).

The Radical SAM core domain maps to 9–229 (GFGRDVRYLR…DNGLNTGGPA (221 aa)). Arg-18 provides a ligand contact to GTP. 2 residues coordinate [4Fe-4S] cluster: Cys-25 and Cys-29. Tyr-31 contributes to the S-adenosyl-L-methionine binding site. Cys-32 serves as a coordination point for [4Fe-4S] cluster. Arg-60 provides a ligand contact to GTP. Residue Gly-64 coordinates S-adenosyl-L-methionine. Thr-94 serves as a coordination point for GTP. Ser-118 serves as a coordination point for S-adenosyl-L-methionine. Lys-154 is a binding site for GTP. Met-188 provides a ligand contact to S-adenosyl-L-methionine. Positions 252 and 255 each coordinate [4Fe-4S] cluster. Residue 257 to 259 (RVR) coordinates GTP. A [4Fe-4S] cluster-binding site is contributed by Cys-269.

The protein belongs to the radical SAM superfamily. MoaA family. As to quaternary structure, monomer and homodimer. Requires [4Fe-4S] cluster as cofactor.

The catalysed reaction is GTP + AH2 + S-adenosyl-L-methionine = (8S)-3',8-cyclo-7,8-dihydroguanosine 5'-triphosphate + 5'-deoxyadenosine + L-methionine + A + H(+). The protein operates within cofactor biosynthesis; molybdopterin biosynthesis. Catalyzes the cyclization of GTP to (8S)-3',8-cyclo-7,8-dihydroguanosine 5'-triphosphate. This chain is GTP 3',8-cyclase, found in Rhodobacter capsulatus (Rhodopseudomonas capsulata).